Here is a 322-residue protein sequence, read N- to C-terminus: Corticotropin-releasing factor-binding protein (322 aa).

The N-terminal stretch at 1–24 (MSPNFKLQCHFTLILLTALRGESR) is a signal peptide. 5 disulfide bridges follow: Cys60–Cys81, Cys104–Cys141, Cys183–Cys205, Cys237–Cys264, and Cys277–Cys318. N-linked (GlcNAc...) asparagine glycosylation occurs at Asn204.

The protein belongs to the CRF-binding protein family.

Its subcellular location is the secreted. Its function is as follows. Binds CRF and inactivates it. May prevent inappropriate pituitary-adrenal stimulation in pregnancy. The protein is Corticotropin-releasing factor-binding protein (Crhbp) of Rattus norvegicus (Rat).